A 316-amino-acid chain; its full sequence is Porphobilinogen deaminase (316 aa).

An S-(dipyrrolylmethanemethyl)cysteine modification is found at Cys242.

The protein belongs to the HMBS family. In terms of assembly, monomer. It depends on dipyrromethane as a cofactor.

It carries out the reaction 4 porphobilinogen + H2O = hydroxymethylbilane + 4 NH4(+). It participates in porphyrin-containing compound metabolism; protoporphyrin-IX biosynthesis; coproporphyrinogen-III from 5-aminolevulinate: step 2/4. Tetrapolymerization of the monopyrrole PBG into the hydroxymethylbilane pre-uroporphyrinogen in several discrete steps. The protein is Porphobilinogen deaminase of Thioalkalivibrio sulfidiphilus (strain HL-EbGR7).